The chain runs to 1217 residues: Endonuclease YhcR (1217 aa).

The first 46 residues, 1–46, serve as a signal peptide directing secretion; it reads MLSVEMISRQNRCHYVYKGGNMMRRILHIVLITALMFLNVMYTFEA. The TNase-like domain maps to 376-517; that stretch reads GEYEGIVDRV…KKDQKGIWNE (142 aa). Active-site residues include arginine 404, glutamate 412, and arginine 460. Residues 590 to 828 form a phosphoesterase region; sequence LRILSMNDLH…VIFAAHNHQV (239 aa). The a divalent metal cation site is built by aspartate 597, histidine 599, aspartate 647, asparagine 680, histidine 792, and histidine 824. Residues 829–1085 form a 5'-nucleotidase region; the sequence is VNGEVNGKLI…AYTKEGRIKL (257 aa). Residues phenylalanine 965 and 1035 to 1042 contribute to the substrate site; that span reads FMATATGA. Positions 1087 to 1142 are disordered; the sequence is EASDIEDPVTEDPITEEPGDDPGTEDPIKEDPRPGEDLPDIKETPGTAPVHQLPPS. Over residues 1089–1110 the composition is skewed to acidic residues; sequence SDIEDPVTEDPITEEPGDDPGT. Positions 1112-1129 are enriched in basic and acidic residues; the sequence is DPIKEDPRPGEDLPDIKE. The LPXTG sorting signal signature appears at 1182–1186; the sequence is LPDTS. At threonine 1185 the chain carries Pentaglycyl murein peptidoglycan amidated threonine. The propeptide at 1186–1217 is removed by sortase; sequence SAGYYNFMVIGAAVTLSGTYLYVRRKRSASRT.

The protein in the C-terminal section; belongs to the 5'-nucleotidase family. Requires Ca(2+) as cofactor. It depends on Mn(2+) as a cofactor.

The protein localises to the secreted. It localises to the cell wall. Requires a minimum of 0.1 mM of calcium for a significant activity. Maximal activity was observed with concentrations of calcium between 1 to 5 mM. Is 10-fold less active with the corresponding concentrations of manganese. Inhibited by NaCl at concentrations of 100 mM and higher. Sugar-nonspecific endonuclease that yields nucleotide 3'-monophosphate products. No 5'-nucleotidase activity was detected, using 5'-AMP as the substrate, in the presence of diverse divalent metals and with various pH values. The sequence is that of Endonuclease YhcR (yhcR) from Bacillus subtilis (strain 168).